The primary structure comprises 122 residues: Small ribosomal subunit protein bS6 (122 aa).

The protein belongs to the bacterial ribosomal protein bS6 family.

In terms of biological role, binds together with bS18 to 16S ribosomal RNA. In Neisseria meningitidis serogroup C (strain 053442), this protein is Small ribosomal subunit protein bS6.